A 109-amino-acid chain; its full sequence is Putative double-stranded DNA mimic protein CKO_01325 (109 aa).

It belongs to the putative dsDNA mimic protein family.

In terms of biological role, may act as a double-stranded DNA (dsDNA) mimic. Probably regulates the activity of a dsDNA-binding protein. The chain is Putative double-stranded DNA mimic protein CKO_01325 from Citrobacter koseri (strain ATCC BAA-895 / CDC 4225-83 / SGSC4696).